The sequence spans 350 residues: Biotin synthase (350 aa).

The region spanning 41 to 268 (NEVQISRLLS…LSRVRLSAGR (228 aa)) is the Radical SAM core domain. Residues Cys-56, Cys-60, and Cys-63 each contribute to the [4Fe-4S] cluster site. Residues Cys-100, Cys-131, Cys-191, and Arg-263 each contribute to the [2Fe-2S] cluster site.

This sequence belongs to the radical SAM superfamily. Biotin synthase family. As to quaternary structure, homodimer. [4Fe-4S] cluster is required as a cofactor. The cofactor is [2Fe-2S] cluster.

The catalysed reaction is (4R,5S)-dethiobiotin + (sulfur carrier)-SH + 2 reduced [2Fe-2S]-[ferredoxin] + 2 S-adenosyl-L-methionine = (sulfur carrier)-H + biotin + 2 5'-deoxyadenosine + 2 L-methionine + 2 oxidized [2Fe-2S]-[ferredoxin]. It functions in the pathway cofactor biosynthesis; biotin biosynthesis; biotin from 7,8-diaminononanoate: step 2/2. Its function is as follows. Catalyzes the conversion of dethiobiotin (DTB) to biotin by the insertion of a sulfur atom into dethiobiotin via a radical-based mechanism. This is Biotin synthase from Shewanella oneidensis (strain ATCC 700550 / JCM 31522 / CIP 106686 / LMG 19005 / NCIMB 14063 / MR-1).